We begin with the raw amino-acid sequence, 595 residues long: Grainyhead-like protein 3 homolog (595 aa).

Residues 29 to 92 (DAWSKYLENP…CDQVKRSCSE (64 aa)) are transcription activation. Residues 221–454 (ANRDFEYTLE…DMETHPVLFI (234 aa)) form the Grh/CP2 DB domain. A disordered region spans residues 484 to 505 (SSQSFPKGLEAPPSKQQTSEDS).

It belongs to the grh/CP2 family. Grainyhead subfamily.

It localises to the nucleus. In terms of biological role, transcription factor playing important roles in primary neurulation and in the differentiation of stratified epithelia of both ectodermal and endodermal origin. Binds directly to the consensus DNA sequence 5'-AACCGGTT-3' acting as an activator and repressor on distinct target genes. The polypeptide is Grainyhead-like protein 3 homolog (grhl3) (Xenopus laevis (African clawed frog)).